We begin with the raw amino-acid sequence, 279 residues long: Shikimate dehydrogenase (NADP(+)) (279 aa).

Residues 21–23 and T68 contribute to the shikimate site; that span reads SRS. The active-site Proton acceptor is K72. D83 contacts NADP(+). Positions 92 and 107 each coordinate shikimate. NADP(+) contacts are provided by residues 132–136, 156–161, and L221; these read GAGGA and NRTVER. Y223 provides a ligand contact to shikimate. NADP(+) is bound at residue G244.

Belongs to the shikimate dehydrogenase family. As to quaternary structure, homodimer.

It catalyses the reaction shikimate + NADP(+) = 3-dehydroshikimate + NADPH + H(+). It participates in metabolic intermediate biosynthesis; chorismate biosynthesis; chorismate from D-erythrose 4-phosphate and phosphoenolpyruvate: step 4/7. Involved in the biosynthesis of the chorismate, which leads to the biosynthesis of aromatic amino acids. Catalyzes the reversible NADPH linked reduction of 3-dehydroshikimate (DHSA) to yield shikimate (SA). This chain is Shikimate dehydrogenase (NADP(+)), found in Nitrobacter winogradskyi (strain ATCC 25391 / DSM 10237 / CIP 104748 / NCIMB 11846 / Nb-255).